A 420-amino-acid polypeptide reads, in one-letter code: Xyloglucan O-acetyltransferase 4 (420 aa).

The Cytoplasmic segment spans residues 1 to 30 (MTMHEKMKLPSCSCSAFKCGKKDRWLNMER). The chain crosses the membrane as a helical; Signal-anchor for type II membrane protein span at residues 31-51 (PIPFLLIGLTTILSVFILYTL). Topologically, residues 52-420 (NPLKFVIEHN…LLLAVLRRLD (369 aa)) are lumenal. 4 disulfides stabilise this stretch: Cys78-Cys128, Cys99-Cys164, Cys108-Cys400, and Cys323-Cys396. N-linked (GlcNAc...) asparagine glycosylation is present at Asn96. Residues 151 to 153 (GDS) carry the GDS motif motif. Ser153 functions as the Nucleophile in the catalytic mechanism. 4 N-linked (GlcNAc...) asparagine glycosylation sites follow: Asn192, Asn212, Asn270, and Asn324. Asp395 (proton donor) is an active-site residue. The DXXH motif signature appears at 395 to 398 (DCVH). His398 serves as the catalytic Proton acceptor.

This sequence belongs to the PC-esterase family. TBL subfamily.

Its subcellular location is the golgi apparatus membrane. Functionally, xyloglucan acetyltransferase that catalyzes the acetylation of fucosylated Gal residues on xyloglucan side chains. Predominantly catalyze 6-O-monoacetylation of Gal residues in the Fuc-Gal-Xyl trisaccharide side chains of xyloglucan oligomers. The sequence is that of Xyloglucan O-acetyltransferase 4 from Populus trichocarpa (Western balsam poplar).